The primary structure comprises 294 residues: Acetylglutamate kinase (294 aa).

Residues 63-64 (GG), Arg-85, and Asn-188 each bind substrate.

Belongs to the acetylglutamate kinase family. ArgB subfamily.

The protein localises to the cytoplasm. It catalyses the reaction N-acetyl-L-glutamate + ATP = N-acetyl-L-glutamyl 5-phosphate + ADP. Its pathway is amino-acid biosynthesis; L-arginine biosynthesis; N(2)-acetyl-L-ornithine from L-glutamate: step 2/4. Catalyzes the ATP-dependent phosphorylation of N-acetyl-L-glutamate. In Methanococcus maripaludis (strain C7 / ATCC BAA-1331), this protein is Acetylglutamate kinase.